Reading from the N-terminus, the 107-residue chain is UPF0145 protein YbjQ (107 aa).

The protein belongs to the UPF0145 family.

The chain is UPF0145 protein YbjQ from Shigella flexneri.